The sequence spans 128 residues: Phosphoribosyl-AMP cyclohydrolase (128 aa).

D89 serves as a coordination point for Mg(2+). Position 90 (C90) interacts with Zn(2+). Residues D91 and D93 each coordinate Mg(2+). Zn(2+) contacts are provided by C106 and C113.

This sequence belongs to the PRA-CH family. As to quaternary structure, homodimer. Mg(2+) serves as cofactor. It depends on Zn(2+) as a cofactor.

It is found in the cytoplasm. The enzyme catalyses 1-(5-phospho-beta-D-ribosyl)-5'-AMP + H2O = 1-(5-phospho-beta-D-ribosyl)-5-[(5-phospho-beta-D-ribosylamino)methylideneamino]imidazole-4-carboxamide. It participates in amino-acid biosynthesis; L-histidine biosynthesis; L-histidine from 5-phospho-alpha-D-ribose 1-diphosphate: step 3/9. Functionally, catalyzes the hydrolysis of the adenine ring of phosphoribosyl-AMP. The chain is Phosphoribosyl-AMP cyclohydrolase from Pyrobaculum calidifontis (strain DSM 21063 / JCM 11548 / VA1).